Here is a 393-residue protein sequence, read N- to C-terminus: G protein-activated inward rectifier potassium channel 3 (393 aa).

A disordered region spans residues 1-23 (MAQENAAFSPGSEEPPRRRGRQR). Topologically, residues 1-57 (MAQENAAFSPGSEEPPRRRGRQRYVEKDGRCNVQQGNVRETYRYLTDLFTTLVDLQW) are cytoplasmic. A helical membrane pass occupies residues 58–82 (RLSLLFFVLAYALTWLFFGAIWWLI). At 83-106 (AYGRGDLEHLEDTAWTPCVNNLNG) the chain is on the extracellular side. The segment at residues 107–118 (FVAAFLFSIETE) is an intramembrane region (helical; Pore-forming). The pore-forming intramembrane region spans 119–125 (TTIGYGH). Positions 120–125 (TIGYGH) match the Selectivity filter motif. At 126–134 (RVITDQCPE) the chain is on the extracellular side. The chain crosses the membrane as a helical span at residues 135–156 (GIVLLLLQAILGSMVNAFMVGC). The Cytoplasmic segment spans residues 157 to 393 (MFVKISQPNK…LPPPESESKV (237 aa)). The segment at 360–393 (KVEEEGAGEGAGAGDGADKEQNGCLPPPESESKV) is disordered. Over residues 384-393 (LPPPESESKV) the composition is skewed to pro residues. Positions 390-393 (ESKV) match the PDZ-binding motif.

The protein belongs to the inward rectifier-type potassium channel (TC 1.A.2.1) family. KCNJ9 subfamily. As to quaternary structure, associates with KCNJ3/GIRK1 to form a G-protein-activated heteromultimer pore-forming unit. Interacts (via PDZ-binding motif) with SNX27 (via PDZ domain); the interaction is required when endocytosed to prevent degradation in lysosomes and promote recycling to the plasma membrane.

It localises to the membrane. The catalysed reaction is K(+)(in) = K(+)(out). In terms of biological role, this receptor is controlled by G proteins. Inward rectifier potassium channels are characterized by a greater tendency to allow potassium to flow into the cell rather than out of it. Their voltage dependence is regulated by the concentration of extracellular potassium; as external potassium is raised, the voltage range of the channel opening shifts to more positive voltages. The inward rectification is mainly due to the blockage of outward current by internal magnesium. Unable to produce channel activity when expressed alone but forms a functional channel in association with KCNJ3/GIRK1. In Rattus norvegicus (Rat), this protein is G protein-activated inward rectifier potassium channel 3 (Kcnj9).